Reading from the N-terminus, the 95-residue chain is Aspartyl/glutamyl-tRNA(Asn/Gln) amidotransferase subunit C (95 aa).

This sequence belongs to the GatC family. In terms of assembly, heterotrimer of A, B and C subunits.

It carries out the reaction L-glutamyl-tRNA(Gln) + L-glutamine + ATP + H2O = L-glutaminyl-tRNA(Gln) + L-glutamate + ADP + phosphate + H(+). It catalyses the reaction L-aspartyl-tRNA(Asn) + L-glutamine + ATP + H2O = L-asparaginyl-tRNA(Asn) + L-glutamate + ADP + phosphate + 2 H(+). Functionally, allows the formation of correctly charged Asn-tRNA(Asn) or Gln-tRNA(Gln) through the transamidation of misacylated Asp-tRNA(Asn) or Glu-tRNA(Gln) in organisms which lack either or both of asparaginyl-tRNA or glutaminyl-tRNA synthetases. The reaction takes place in the presence of glutamine and ATP through an activated phospho-Asp-tRNA(Asn) or phospho-Glu-tRNA(Gln). The sequence is that of Aspartyl/glutamyl-tRNA(Asn/Gln) amidotransferase subunit C from Chlorobium limicola (strain DSM 245 / NBRC 103803 / 6330).